The following is a 265-amino-acid chain: Glutamate racemase (265 aa).

Substrate contacts are provided by residues 9 to 10 (DS) and 41 to 42 (YG). C72 functions as the Proton donor/acceptor in the catalytic mechanism. Substrate is bound at residue 73–74 (NT). Residue C183 is the Proton donor/acceptor of the active site. 184 to 185 (TH) contacts substrate.

Belongs to the aspartate/glutamate racemases family.

It carries out the reaction L-glutamate = D-glutamate. The protein operates within cell wall biogenesis; peptidoglycan biosynthesis. Functionally, provides the (R)-glutamate required for cell wall biosynthesis. This chain is Glutamate racemase, found in Lysinibacillus sphaericus (strain C3-41).